Reading from the N-terminus, the 249-residue chain is 5-amino-6-(5-phospho-D-ribitylamino)uracil phosphatase YcsE (249 aa).

The Nucleophile role is filled by Asp-16. Residue Asp-16 coordinates Mg(2+). A phosphate-binding site is contributed by Met-17. A Mg(2+)-binding site is contributed by Asp-18. Phosphate contacts are provided by residues 50–51 (TG) and Lys-177. Asp-200 and Ser-201 together coordinate Mg(2+). A phosphate-binding site is contributed by Asn-203.

It belongs to the HAD-like hydrolase superfamily. Cof family. The cofactor is Mg(2+).

The catalysed reaction is 5-amino-6-(5-phospho-D-ribitylamino)uracil + H2O = 5-amino-6-(D-ribitylamino)uracil + phosphate. Its pathway is cofactor biosynthesis; riboflavin biosynthesis; 5-amino-6-(D-ribitylamino)uracil from GTP: step 4/4. Its function is as follows. Catalyzes the dephosphorylation of the riboflavin precursor 5-amino-6-(5-phospho-D-ribitylamino)uracil and of flavin mononucleotide (FMN) in vitro. To a lesser extent, may also catalyze the dephosphorylation of a broad range of substrates such as phosphorylated sugars and triphosphate nucleotides in vitro. This is 5-amino-6-(5-phospho-D-ribitylamino)uracil phosphatase YcsE (ycsE) from Bacillus subtilis (strain 168).